The sequence spans 463 residues: Matrix remodeling-associated protein 8 (463 aa).

A signal peptide spans 1–19 (MELRAWVLLWRLVLLQSSA). Residues 20-362 (VLLSSGPSGP…PEGRAHFFQQ (343 aa)) are Extracellular-facing. Ig-like V-type domains lie at 29–173 (PATS…LEVT) and 176–308 (PRAA…LRVT). 2 disulfides stabilise this stretch: cysteine 54-cysteine 153 and cysteine 202-cysteine 288. Asparagine 135 carries N-linked (GlcNAc...) asparagine glycosylation. Phosphoserine is present on serine 244. An RGD motif is present at residues 268–270 (RGD). Residues 309 to 341 (EPAARPPPPPRDSPGNGSSHSGAPGPGARDPTL) are disordered. Low complexity predominate over residues 321-335 (SPGNGSSHSGAPGPG). Asparagine 324 carries an N-linked (GlcNAc...) asparagine glycan. A helical transmembrane segment spans residues 363-383 (LGYVLATLLLFILLLITVVLA). The Cytoplasmic portion of the chain corresponds to 384–463 (TRQRRRGGYE…DKEFRKEYCK (80 aa)).

In terms of assembly, homodimer in cis. Does not appear to form trans-homodimers. Interacts with ITGB3; the interaction inhibits ITGAV:ITGB3 heterodimer formation.

The protein localises to the cell membrane. It localises to the cell junction. It is found in the tight junction. Its subcellular location is the cytoplasm. The protein resides in the cell projection. The protein localises to the cilium membrane. It localises to the nucleus. Transmembrane protein which can modulate activity of various signaling pathways, probably via binding to integrin ITGAV:ITGB3. Mediates heterophilic cell-cell interactions in vitro. Inhibits osteoclastogenesis downstream of TNFSF11/RANKL and CSF1, where it may function by attenuating signaling via integrin ITGB3 and MAP kinase p38. Plays a role in cartilage formation where it promotes proliferation and maturation of growth plate chondrocytes. Stimulates formation of primary cilia in chondrocytes. Enhances expression of genes involved in the hedgehog signaling pathway in chondrocytes, including the hedgehog signaling molecule IHH; may also promote signaling via the PTHLH/PTHrP pathway. Plays a role in angiogenesis where it suppresses migration of endothelial cells and also promotes their apoptosis. Inhibits VEGF-induced activation of AKT and p38 MAP kinase in endothelial cells. Also inhibits VTN (vitronectin)-mediated integrin ITGAV:ITGB3 signaling and activation of PTK2/FAK. May play a role in the maturation and maintenance of the blood-brain barrier. This Bos taurus (Bovine) protein is Matrix remodeling-associated protein 8 (MXRA8).